The chain runs to 422 residues: UDP-N-acetylglucosamine 1-carboxyvinyltransferase (422 aa).

22-23 is a phosphoenolpyruvate binding site; it reads KN. Residue Arg93 participates in UDP-N-acetyl-alpha-D-glucosamine binding. The Proton donor role is filled by Cys117. Cys117 is subject to 2-(S-cysteinyl)pyruvic acid O-phosphothioketal. UDP-N-acetyl-alpha-D-glucosamine is bound by residues 122-126, Asp308, and Leu330; that span reads RPVDL.

It belongs to the EPSP synthase family. MurA subfamily.

It localises to the cytoplasm. The enzyme catalyses phosphoenolpyruvate + UDP-N-acetyl-alpha-D-glucosamine = UDP-N-acetyl-3-O-(1-carboxyvinyl)-alpha-D-glucosamine + phosphate. The protein operates within cell wall biogenesis; peptidoglycan biosynthesis. Cell wall formation. Adds enolpyruvyl to UDP-N-acetylglucosamine. This is UDP-N-acetylglucosamine 1-carboxyvinyltransferase from Helicobacter pylori (strain Shi470).